Consider the following 681-residue polypeptide: DNA ligase (681 aa).

Residues 45–49 (DFDFD), 94–95 (SL), and glutamate 120 each bind NAD(+). Lysine 122 acts as the N6-AMP-lysine intermediate in catalysis. 4 residues coordinate NAD(+): arginine 143, glutamate 177, lysine 289, and lysine 313. Residues cysteine 403, cysteine 406, cysteine 421, and cysteine 426 each coordinate Zn(2+). Positions 593 to 681 (ADQQPFAGQS…SLKIDFKNLI (89 aa)) constitute a BRCT domain.

It belongs to the NAD-dependent DNA ligase family. LigA subfamily. It depends on Mg(2+) as a cofactor. Mn(2+) serves as cofactor.

It carries out the reaction NAD(+) + (deoxyribonucleotide)n-3'-hydroxyl + 5'-phospho-(deoxyribonucleotide)m = (deoxyribonucleotide)n+m + AMP + beta-nicotinamide D-nucleotide.. In terms of biological role, DNA ligase that catalyzes the formation of phosphodiester linkages between 5'-phosphoryl and 3'-hydroxyl groups in double-stranded DNA using NAD as a coenzyme and as the energy source for the reaction. It is essential for DNA replication and repair of damaged DNA. The polypeptide is DNA ligase (Leptospira interrogans serogroup Icterohaemorrhagiae serovar Lai (strain 56601)).